Here is a 248-residue protein sequence, read N- to C-terminus: Mannose-binding protein C (248 aa).

The signal sequence occupies residues 1–20 (MSLFPSLPLLLLSVVATSYS). The Collagen-like domain maps to 42-99 (GINGFPGKDGRDGTKGEKGEPGQGLRGLQGPPGKLGPPGNPGPSGSPGPKGQKGDPGE). The tract at residues 43 to 111 (INGFPGKDGR…DCDSSLAASE (69 aa)) is disordered. At Pro47 the chain carries 4-hydroxyproline. Residues 49–61 (KDGRDGTKGEKGE) are compositionally biased toward basic and acidic residues. 4-hydroxyproline is present on residues Pro73, Pro79, Pro82, and Pro88. Over residues 75–87 (KLGPPGNPGPSGS) the composition is skewed to pro residues. Residues 112 to 130 (RKALQTEMAHIKKWLTFSL) adopt a coiled-coil conformation. Residues 134-245 (VGNKFFLTNG…CSSSHLALCE (112 aa)) enclose the C-type lectin domain. 2 disulfides stabilise this stretch: Cys155-Cys244 and Cys222-Cys236.

In terms of assembly, oligomeric complex of 3 or more homotrimers. Interacts with MASP1 and MASP2. Interacts with MEP1A and MEP1B and may inhibit their catalytic activity. In terms of processing, hydroxylation on proline residues within the sequence motif, GXPG, is most likely to be 4-hydroxy as this fits the requirement for 4-hydroxylation in vertebrates.

It is found in the secreted. In terms of biological role, calcium-dependent lectin involved in innate immune defense. Binds mannose, fucose and N-acetylglucosamine on different microorganisms and activates the lectin complement pathway. Binds to late apoptotic cells, as well as to apoptotic blebs and to necrotic cells, but not to early apoptotic cells, facilitating their uptake by macrophages. In Trachypithecus obscurus (Dusky leaf-monkey), this protein is Mannose-binding protein C (MBL2).